A 344-amino-acid polypeptide reads, in one-letter code: Dihydroorotase (344 aa).

Zn(2+)-binding residues include His-14 and His-16. Substrate is bound by residues 16-18 (HLR) and Asn-42. Zn(2+) is bound by residues Lys-100, His-137, and His-175. Lys-100 is modified (N6-carboxylysine). His-137 is a binding site for substrate. Leu-220 is a substrate binding site. Residue Asp-248 coordinates Zn(2+). Asp-248 is a catalytic residue. Residues His-252 and Ala-264 each coordinate substrate.

This sequence belongs to the metallo-dependent hydrolases superfamily. DHOase family. Class II DHOase subfamily. In terms of assembly, homodimer. It depends on Zn(2+) as a cofactor.

It carries out the reaction (S)-dihydroorotate + H2O = N-carbamoyl-L-aspartate + H(+). It participates in pyrimidine metabolism; UMP biosynthesis via de novo pathway; (S)-dihydroorotate from bicarbonate: step 3/3. In terms of biological role, catalyzes the reversible cyclization of carbamoyl aspartate to dihydroorotate. The sequence is that of Dihydroorotase from Roseobacter denitrificans (strain ATCC 33942 / OCh 114) (Erythrobacter sp. (strain OCh 114)).